The following is a 589-amino-acid chain: Growth factor receptor-bound protein 10 (589 aa).

Disordered stretches follow at residues 1–51 and 77–107; these read MALA…EDDV and LHNGQHARGPPPPGARPLRPQASPRHRVPRS. At Ser-99 the chain carries Phosphoserine. A Phosphoserine; by MTOR, MAPK1 and MAPK3 modification is found at Ser-145. The Ras-associating domain occupies 161–245; that stretch reads AKQDVKVFSE…SKFLFRKNYA (85 aa). In terms of domain architecture, PH spans 285–394; the sequence is CPEIQGFLHV…WMTAFRLLKY (110 aa). Residue Ser-413 is modified to Phosphoserine; by MAPK1 and MAPK3; in vitro. Residue Ser-423 is modified to Phosphoserine; by MTOR and PKB/AKT1. A Phosphoserine modification is found at Ser-426. Ser-471 is modified (phosphoserine; by MTOR, MAPK1 and MAPK3). The region spanning 488–584 is the SH2 domain; the sequence is WFHGRISREE…VLPCKLKHHC (97 aa).

It belongs to the GRB7/10/14 family. As to quaternary structure, interacts with ligand-activated tyrosine kinase receptors, including FGFR1, INSR, IGF1R, MET and PDGFRB in a phosphotyrosine-dependent manner through the SH2 domain. Poorly binds to the EGFR. Directly interacts with MAP3K14/NIK and is recruited to the EGFR-ERBB2 complex. Interacts with GIGYF1/PERQ1 and GIGYF2/TNRC15. When unphosphorylated, interacts with AKT1 and when phosphorylated with YWHAE/14-3-3 epsilon. Interacts with NEDD4. Interacts with LRP6, thus interfering with the binding of AXIN1 to LRP6. Binds relatively non-specifically to several phosphoinositides, including PI(5)P, PI(4,5)P2, PI(3,4)P2 and PI(3,4,5)P3, with modest affinities through the PH domain. Binds to activated NRAS. Phosphorylated on serine residues upon EGF, FGF and PDGF stimulation.

Its subcellular location is the cytoplasm. With respect to regulation, phosphorylation by mTORC1 stabilizes and activates GRB10 constituting a feedback pathway by which mTORC1 inhibits INSR-dependent signaling. In terms of biological role, adapter protein which modulates coupling of a number of cell surface receptor kinases with specific signaling pathways. Binds to, and suppress signals from, activated receptors tyrosine kinases, including the insulin (INSR) and insulin-like growth factor (IGF1R) receptors. The inhibitory effect can be achieved by 2 mechanisms: interference with the signaling pathway and increased receptor degradation. Delays and reduces AKT1 phosphorylation in response to insulin stimulation. Blocks association between INSR and IRS1 and IRS2 and prevents insulin-stimulated IRS1 and IRS2 tyrosine phosphorylation. Recruits NEDD4 to IGF1R, leading to IGF1R ubiquitination, increased internalization and degradation by both the proteasomal and lysosomal pathways. A similar role in the mediation of ubiquitination also has been suggested with INSR. Negatively regulates Wnt signaling by interacting with LRP6 intracellular portion and interfering with the binding of AXIN1 to LRP6. Positive regulator of the KDR/VEGFR-2 signaling pathway. May inhibit NEDD4-mediated degradation of KDR/VEGFR-2. The chain is Growth factor receptor-bound protein 10 (Grb10) from Sus scrofa (Pig).